The sequence spans 278 residues: Large ribosomal subunit protein uL2 (278 aa).

2 disordered regions span residues Lys-28 to Gly-56 and Arg-221 to Arg-278. Basic residues predominate over residues Ile-269–Arg-278.

Belongs to the universal ribosomal protein uL2 family. In terms of assembly, part of the 50S ribosomal subunit. Forms a bridge to the 30S subunit in the 70S ribosome.

One of the primary rRNA binding proteins. Required for association of the 30S and 50S subunits to form the 70S ribosome, for tRNA binding and peptide bond formation. It has been suggested to have peptidyltransferase activity; this is somewhat controversial. Makes several contacts with the 16S rRNA in the 70S ribosome. The chain is Large ribosomal subunit protein uL2 from Rhizorhabdus wittichii (strain DSM 6014 / CCUG 31198 / JCM 15750 / NBRC 105917 / EY 4224 / RW1) (Sphingomonas wittichii).